We begin with the raw amino-acid sequence, 330 residues long: Small ribosomal subunit protein mS35 (330 aa).

A disordered region spans residues 50-73 (AAGKGVRGQMKPRRQAGEPRTERM). Residues 64–73 (QAGEPRTERM) are compositionally biased toward basic and acidic residues.

Belongs to the mitochondrion-specific ribosomal protein mS35 family. As to quaternary structure, component of the mitochondrial ribosome small subunit (28S) which comprises a 12S rRNA and about 30 distinct proteins.

Its subcellular location is the mitochondrion. In Danio rerio (Zebrafish), this protein is Small ribosomal subunit protein mS35 (mrps35).